Consider the following 327-residue polypeptide: Cell division protein ZipA (327 aa).

At 1 to 5 (MQDLR) the chain is on the periplasmic side. A helical membrane pass occupies residues 6 to 26 (LILIVVGAIAIIALLLHGLWT). Residues 27–327 (SRKERSSLFR…REVLDANTIA (301 aa)) lie on the Cytoplasmic side of the membrane. Positions 60–71 (GEVRVRTSHPQE) are enriched in basic and acidic residues. A disordered region spans residues 60–182 (GEVRVRTSHP…EPVAPAPEAK (123 aa)). 2 stretches are compositionally biased toward polar residues: residues 94–103 (KSAQVKTASR) and 163–173 (APQQHVESQQE).

Belongs to the ZipA family. As to quaternary structure, interacts with FtsZ via their C-terminal domains.

The protein localises to the cell inner membrane. Its function is as follows. Essential cell division protein that stabilizes the FtsZ protofilaments by cross-linking them and that serves as a cytoplasmic membrane anchor for the Z ring. Also required for the recruitment to the septal ring of downstream cell division proteins. This Yersinia pseudotuberculosis serotype O:1b (strain IP 31758) protein is Cell division protein ZipA.